Consider the following 437-residue polypeptide: UDP-N-acetylmuramate--L-alanine ligase (437 aa).

ATP is bound at residue 108-114 (GAHGKTS).

Belongs to the MurCDEF family.

The protein resides in the cytoplasm. The enzyme catalyses UDP-N-acetyl-alpha-D-muramate + L-alanine + ATP = UDP-N-acetyl-alpha-D-muramoyl-L-alanine + ADP + phosphate + H(+). Its pathway is cell wall biogenesis; peptidoglycan biosynthesis. Its function is as follows. Cell wall formation. In Staphylococcus carnosus (strain TM300), this protein is UDP-N-acetylmuramate--L-alanine ligase.